The following is a 200-amino-acid chain: Ubiquinol-cytochrome-c reductase complex assembly factor 1 (200 aa).

This sequence belongs to the CBP3 family.

The protein localises to the mitochondrion inner membrane. In terms of biological role, required for the assembly of the ubiquinol-cytochrome c reductase complex (mitochondrial respiratory chain complex III or cytochrome b-c1 complex). May be involved in cytochrome b translation and/or stability. This Xenopus laevis (African clawed frog) protein is Ubiquinol-cytochrome-c reductase complex assembly factor 1 (uqcc1).